Consider the following 175-residue polypeptide: Large ribosomal subunit protein uL16 (175 aa).

Belongs to the universal ribosomal protein uL16 family.

The chain is Large ribosomal subunit protein uL16 from Metallosphaera sedula (strain ATCC 51363 / DSM 5348 / JCM 9185 / NBRC 15509 / TH2).